The sequence spans 687 residues: Protein SDA1 homolog (687 aa).

Serine 232, serine 234, and serine 236 each carry phosphoserine. A coiled-coil region spans residues 254–315; sequence KKGSKNKKKL…SCKERFEVKM (62 aa). Residues 484 to 509 are disordered; that stretch reads LEKGENTEDDEDGWESASLSEEEEED. Positions 490-509 are enriched in acidic residues; it reads TEDDEDGWESASLSEEEEED. Threonine 552 carries the phosphothreonine modification. Phosphoserine is present on residues serine 585, serine 589, and serine 595. The segment at 604-651 is disordered; that stretch reads KKPKSDKETRLATAMAGRTDRKEFVRKKTKINPFSSSTNKEKKKQKNF.

Belongs to the SDA1 family.

The protein resides in the nucleus. It localises to the nucleolus. In terms of biological role, required for 60S pre-ribosomal subunits export to the cytoplasm. This Mus musculus (Mouse) protein is Protein SDA1 homolog (Sdad1).